An 889-amino-acid polypeptide reads, in one-letter code: MVTQILTKMFGTKHDREMKKIQPTVDRINALEPQMAALTDDQLKAKTPEFQERLKKGETVHDILPEAFAVCREASKRVLGMRHYDVQLIGGYVLNRGNIAEMRTGEGKTLVATLPVYLNALTGRGVHVVTVNDYLVRRDAEHMGRLYGWLGLTTGIIVHGLTDQQRKQMYACDITYCTNNELGFDYLRDNMKFDLNDYVQRPHYYAIVDECDSILVDEARTPLIISGPAESSTDKYYAVNQIIPHLKRDVHFTMEEKSKTASLTDAGNAKVEELMGLSNLYDPQNIEILHHVYQGLKAHYLYRLDVEYMIKDGEIVIVDEFTGRLMPGRRWSDGLHQAIEAKEGVEVKSENQTLATITFQNYFRMYEKLSGMTGTADTEAVEFKKIYNLEVNVIPTNRPIQRKDQEDVVYKSEKAKFKAITADIKERMAKGQPILVGTESIEKSEALSAFLRKEGVKHEVLNAKHHEREAEIIAQAGRKGAVTIATNMAGRGTDIMLGGNADMLAKAQVGNDDSPEFAEAVQKIKPQVEAERAEVRSVGGLYIIGTERHESRRIDNQLRGRSGRQGDPGESRFYLSLEDKLMRIFNGERIQKIMEMLNIPEDEPITAKMVTNAIEGAQRKVEGHNFDIRKNLMEYDSVMNAQRNAIYGMRRKVLEGQEIERTTLDWLGDVVSNLLDTHIPEGGKKEEWSLEGLNNSLAQSFGFKIDFATMAVNTETVTDAVKSGVKEVWERQKNSMGPFFEQVQKMILLQSIDHHWKNHLYVIDKLKEGISLRGYAQKDPLIEYKKEAFKAFETLNNTIKSDAIEKVMRVQLVAQQNEQEVLESLRPEEADLDELDYSSPSEADIGHSIPETSEDAPKRKMTFQSGPRDDRPMNREERRRMDKDTKGKR.

ATP contacts are provided by residues Q87, 105-109, and D494; that span reads GEGKT. A disordered region spans residues 823-889; that stretch reads ESLRPEEADL…RMDKDTKGKR (67 aa). Over residues 867 to 889 the composition is skewed to basic and acidic residues; the sequence is PRDDRPMNREERRRMDKDTKGKR.

Belongs to the SecA family. As to quaternary structure, monomer and homodimer. Part of the essential Sec protein translocation apparatus which comprises SecA, SecYEG and auxiliary proteins SecDF-YajC and YidC.

The protein resides in the cell inner membrane. It is found in the cytoplasm. It carries out the reaction ATP + H2O + cellular proteinSide 1 = ADP + phosphate + cellular proteinSide 2.. Part of the Sec protein translocase complex. Interacts with the SecYEG preprotein conducting channel. Has a central role in coupling the hydrolysis of ATP to the transfer of proteins into and across the cell membrane, serving as an ATP-driven molecular motor driving the stepwise translocation of polypeptide chains across the membrane. This is Protein translocase subunit SecA from Bdellovibrio bacteriovorus (strain ATCC 15356 / DSM 50701 / NCIMB 9529 / HD100).